We begin with the raw amino-acid sequence, 502 residues long: Cardiolipin synthase (502 aa).

A run of 3 helical transmembrane segments spans residues 7 to 27 (VIIFVLAVAAFLFLTNDYWEG), 29 to 49 (LLGGLSILISCSVVFIAFVIS), and 59 to 79 (ITWLVVLGSFPLIGFFFYLMF). 2 consecutive PLD phosphodiesterase domains span residues 237–264 (INFRNHRKIIVIDGTIGFVGGLNIGDEY) and 415–442 (SKGFLHSKIMIVDGELASIGTANMDMRS). Residues histidine 242, lysine 244, aspartate 249, histidine 420, lysine 422, and aspartate 427 contribute to the active site.

This sequence belongs to the phospholipase D family. Cardiolipin synthase subfamily.

Its subcellular location is the cell membrane. The enzyme catalyses 2 a 1,2-diacyl-sn-glycero-3-phospho-(1'-sn-glycerol) = a cardiolipin + glycerol. Its function is as follows. Catalyzes the reversible phosphatidyl group transfer from one phosphatidylglycerol molecule to another to form cardiolipin (CL) (diphosphatidylglycerol) and glycerol. This chain is Cardiolipin synthase (cls), found in Geobacillus sp. (strain WCH70).